Here is a 144-residue protein sequence, read N- to C-terminus: uncharacterized protein (144 aa).

An HIT domain is found at 13–120; sequence IFCGIVEGNV…VPKYETGLGF (108 aa). Positions 105 to 109 match the Histidine triad motif motif; that stretch reads HYHMH.

This is an uncharacterized protein from Mycoplasma pneumoniae (strain ATCC 29342 / M129 / Subtype 1) (Mycoplasmoides pneumoniae).